Reading from the N-terminus, the 203-residue chain is Ras-related protein Rab-13 (203 aa).

The GTP site is built by Ser17, Gly18, Gly20, Lys21, Thr22, Cys23, and Thr40. Residue Thr22 coordinates Mg(2+). A Switch 1 motif is present at residues 31 to 45; it reads DSFNNTYISTIGIDF. Thr40 provides a ligand contact to Mg(2+). Residues Lys46 and Lys58 each participate in a glycyl lysine isopeptide (Lys-Gly) (interchain with G-Cter in ubiquitin) cross-link. Asp63 is a Mg(2+) binding site. Residues 63 to 80 carry the Switch 2 motif; sequence DTAGQERFKTITTAYYRG. Residues Gly66, Asn121, Lys122, Asp124, Ala152, and Lys153 each coordinate GTP. The tract at residues 173–203 is disordered; the sequence is SGGRRSGNSHKAPGTDLKPCDKKNTSKCSLG. Ser178 bears the Phosphoserine mark. A Cysteine methyl ester modification is found at Cys200. The S-geranylgeranyl cysteine moiety is linked to residue Cys200. A propeptide spans 201-203 (removed in mature form); the sequence is SLG.

It belongs to the small GTPase superfamily. Rab family. In terms of assembly, interacts (GTP-bound form) with MICALL2; competes with RAB8A and is involved in tight junctions assembly. Interacts (GTP-bound form) with MICALL1. Interacts (GTP-bound form) with MICAL1, MICAL3, MICALCL, EHBP1 and EHBP1L1; ternary complexes of RAB8A, RAB13 and either MICAL1 or EHBP1L1 are possible. Interacts with PRKACA; downstream effector of RAB13 involved in tight junction assembly. Interacts with GRB2; may recruit RAB13 to the leading edge of migrating endothelial cells where it can activate RHOA. Interacts (isoprenylated form) with PDE6D; dissociates RAB13 from membranes. Interacts with BICDL2/BICDR2. Interacts with LEPROT and LEPROTL1. Mg(2+) serves as cofactor. Post-translationally, ubiquitinated via 'Lys-11'-linked ubiquitination on Lys-46 and Lys-58; impairing the recruitment of guanosine diphosphate (GDP) dissociation inhibitor 1/GDI1.

Its subcellular location is the cell membrane. The protein resides in the cytoplasmic vesicle membrane. The protein localises to the cell junction. It is found in the tight junction. It localises to the golgi apparatus. Its subcellular location is the trans-Golgi network membrane. The protein resides in the recycling endosome membrane. The protein localises to the cell projection. It is found in the lamellipodium. It catalyses the reaction GTP + H2O = GDP + phosphate + H(+). Its activity is regulated as follows. Regulated by guanine nucleotide exchange factors (GEFs) including DENND1C, which promote the exchange of bound GDP for free GTP. Regulated by GTPase activating proteins (GAPs) which increase the GTP hydrolysis activity. Inhibited by GDP dissociation inhibitors (GDIs). Activated in response to insulin. The small GTPases Rab are key regulators of intracellular membrane trafficking, from the formation of transport vesicles to their fusion with membranes. Rabs cycle between an inactive GDP-bound form and an active GTP-bound form that is able to recruit to membranes different sets of downstream effectors directly responsible for vesicle formation, movement, tethering and fusion. RAB13 is involved in endocytic recycling and regulates the transport to the plasma membrane of transmembrane proteins like the tight junction protein OCLN/occludin. Thereby, it regulates the assembly and the activity of tight junctions. Moreover, it may also regulate tight junction assembly by activating the PKA signaling pathway and by reorganizing the actin cytoskeleton through the activation of the downstream effectors PRKACA and MICALL2 respectively. Through its role in tight junction assembly, may play a role in the establishment of Sertoli cell barrier. Plays also a role in angiogenesis through regulation of endothelial cells chemotaxis. Also involved in neurite outgrowth. Has also been proposed to play a role in post-Golgi membrane trafficking from the TGN to the recycling endosome. Finally, it has been involved in insulin-induced transport to the plasma membrane of the glucose transporter GLUT4 and therefore may play a role in glucose homeostasis. This is Ras-related protein Rab-13 (RAB13) from Canis lupus familiaris (Dog).